The sequence spans 124 residues: Small ribosomal subunit protein uS12 (124 aa).

A 3-methylthioaspartic acid modification is found at Asp-89.

It belongs to the universal ribosomal protein uS12 family. Part of the 30S ribosomal subunit. Contacts proteins S8 and S17. May interact with IF1 in the 30S initiation complex.

Functionally, with S4 and S5 plays an important role in translational accuracy. In terms of biological role, interacts with and stabilizes bases of the 16S rRNA that are involved in tRNA selection in the A site and with the mRNA backbone. Located at the interface of the 30S and 50S subunits, it traverses the body of the 30S subunit contacting proteins on the other side and probably holding the rRNA structure together. The combined cluster of proteins S8, S12 and S17 appears to hold together the shoulder and platform of the 30S subunit. This is Small ribosomal subunit protein uS12 from Mannheimia succiniciproducens (strain KCTC 0769BP / MBEL55E).